The sequence spans 371 residues: MPFLPEPLFQHGQPDRTAILLVNLGTPDGTSPREVGRYLRQFLSDPRVVEIPRAVWWFILNVLIVPLRSRASAHKYESIWLREANMTGSPLLVYSERQAHALQQLLNAQGHDVVVACAMRYGNPSIPSVMQALRKQGVERILVLPMYPQYSGTTTATAFDEVFRVLGEMRNQPELRLVKHFHDDPAYINALHQQVGAYWAQHGAPDFAHGDKLVLSFHGVPRRTLELGDPYHCECLKTGRLLGEALGLQPGQYLVTFQSRFGRAEWLQPYTAPTLEELGRVGTNRVDVFCPGFPADCLETLEEIAMEGQSTFRVAGGKEFHYIPCLNDSEAWIAGIADIALAHLQGWPLTLTHPHVLEASRTRAQSKGAAA.

2 residues coordinate Fe cation: His-218 and Glu-299.

It belongs to the ferrochelatase family.

Its subcellular location is the cytoplasm. The enzyme catalyses heme b + 2 H(+) = protoporphyrin IX + Fe(2+). It functions in the pathway porphyrin-containing compound metabolism; protoheme biosynthesis; protoheme from protoporphyrin-IX: step 1/1. Catalyzes the ferrous insertion into protoporphyrin IX. The chain is Ferrochelatase from Ralstonia pickettii (strain 12J).